Reading from the N-terminus, the 310-residue chain is 4-hydroxyproline 2-epimerase (310 aa).

C88 acts as the Proton acceptor in catalysis. Residues 89–90 (GH), H208, and D232 contribute to the substrate site. The Proton donor role is filled by C236. 237–238 (GT) provides a ligand contact to substrate.

The protein belongs to the proline racemase family.

The catalysed reaction is trans-4-hydroxy-L-proline = cis-4-hydroxy-D-proline. Its function is as follows. Catalyzes the epimerization of trans-4-hydroxy-L-proline (t4LHyp) to cis-4-hydroxy-D-proline (c4DHyp). Is likely involved in a degradation pathway that converts t4LHyp to alpha-ketoglutarate. Displays no proline racemase activity. In Burkholderia cenocepacia (strain ATCC BAA-245 / DSM 16553 / LMG 16656 / NCTC 13227 / J2315 / CF5610) (Burkholderia cepacia (strain J2315)), this protein is 4-hydroxyproline 2-epimerase.